Here is a 150-residue protein sequence, read N- to C-terminus: MARIGIVVSEFNYDITYLMLQKAISHARFLGLEITYVFKVPGTYEIPFAVANLLKRNDVDGVVALGAVIKGATKHDELVASQTARKLMDLMIQYGKPVGLGIIGPGATRMQALERVEDYARRAVEAVAKMINRSKSLEEKKFAGETVFIE.

5-amino-6-(D-ribitylamino)uracil is bound by residues Phe-11, 43 to 45 (TYE), and 67 to 69 (AVI). (2S)-2-hydroxy-3-oxobutyl phosphate is bound at residue 72 to 73 (AT). His-75 functions as the Proton donor in the catalytic mechanism. Residue Leu-100 coordinates 5-amino-6-(D-ribitylamino)uracil. Residue Arg-115 coordinates (2S)-2-hydroxy-3-oxobutyl phosphate.

It belongs to the DMRL synthase family.

It catalyses the reaction (2S)-2-hydroxy-3-oxobutyl phosphate + 5-amino-6-(D-ribitylamino)uracil = 6,7-dimethyl-8-(1-D-ribityl)lumazine + phosphate + 2 H2O + H(+). Its pathway is cofactor biosynthesis; riboflavin biosynthesis; riboflavin from 2-hydroxy-3-oxobutyl phosphate and 5-amino-6-(D-ribitylamino)uracil: step 1/2. Functionally, catalyzes the formation of 6,7-dimethyl-8-ribityllumazine by condensation of 5-amino-6-(D-ribitylamino)uracil with 3,4-dihydroxy-2-butanone 4-phosphate. This is the penultimate step in the biosynthesis of riboflavin. The sequence is that of 6,7-dimethyl-8-ribityllumazine synthase from Staphylothermus marinus (strain ATCC 43588 / DSM 3639 / JCM 9404 / F1).